Here is a 531-residue protein sequence, read N- to C-terminus: Probable protein phosphatase 2C 66 (531 aa).

Residues 1–47 are disordered; it reads MGSCLSSDLPPRAGAGAGASPGWPQRWRRRRQRGVERGGAVSGGGGG. Residues 10–25 show a composition bias toward low complexity; the sequence is PPRAGAGAGASPGWPQ. Residues 88–401 form the PPM-type phosphatase domain; sequence AACLHTQQGR…DDCAVVCLFL (314 aa). Residues D123 and G124 each contribute to the Mn(2+) site. Polar residues predominate over residues 151–172; the sequence is SANEDTSSHQNGSISGSVNSEE. Residues 151–176 are disordered; it reads SANEDTSSHQNGSISGSVNSEESPVV. Residues D346 and D392 each contribute to the Mn(2+) site.

The protein belongs to the PP2C family. The cofactor is Mg(2+). Mn(2+) is required as a cofactor.

It carries out the reaction O-phospho-L-seryl-[protein] + H2O = L-seryl-[protein] + phosphate. The catalysed reaction is O-phospho-L-threonyl-[protein] + H2O = L-threonyl-[protein] + phosphate. This chain is Probable protein phosphatase 2C 66, found in Oryza sativa subsp. japonica (Rice).